The chain runs to 355 residues: Myosin-binding protein H-like (355 aa).

Composition is skewed to polar residues over residues 1–16 (METATTLEIASCSQRQ) and 31–41 (TSHQQEAGSPS). The disordered stretch occupies residues 1 to 41 (METATTLEIASCSQRQVEAAADPADAKGPRTSHQQEAGSPS). A Phosphoserine modification is found at serine 39. The 95-residue stretch at 46 to 140 (PSIEEHPKIW…GGLQATATIN (95 aa)) folds into the Ig-like C2-type 1 domain. Residues 149 to 244 (PPQSIKLVDV…TADLAHIQKA (96 aa)) form the Fibronectin type-III domain. The region spanning 262-346 (PKFTQPLADC…INALGEASVD (85 aa)) is the Ig-like C2-type 2 domain. Cysteine 283 and cysteine 334 are disulfide-bonded. At arginine 322 the chain carries Omega-N-methylarginine.

It belongs to the immunoglobulin superfamily. MyBP family. Expressed in the atria as well as in discrete puncta throughout the right ventricular wall and septum.

It is found in the cytoplasm. It localises to the myofibril. The protein localises to the sarcomere. Its function is as follows. Myosin-binding protein which plays a role in cardiac function. Seems to regulate conduction in the atria and ventricular conduction systems. In Mus musculus (Mouse), this protein is Myosin-binding protein H-like.